Here is a 290-residue protein sequence, read N- to C-terminus: ATP phosphoribosyltransferase (290 aa).

The protein belongs to the ATP phosphoribosyltransferase family. Long subfamily. Mg(2+) is required as a cofactor.

It is found in the cytoplasm. The catalysed reaction is 1-(5-phospho-beta-D-ribosyl)-ATP + diphosphate = 5-phospho-alpha-D-ribose 1-diphosphate + ATP. It participates in amino-acid biosynthesis; L-histidine biosynthesis; L-histidine from 5-phospho-alpha-D-ribose 1-diphosphate: step 1/9. Feedback inhibited by histidine. Catalyzes the condensation of ATP and 5-phosphoribose 1-diphosphate to form N'-(5'-phosphoribosyl)-ATP (PR-ATP). Has a crucial role in the pathway because the rate of histidine biosynthesis seems to be controlled primarily by regulation of HisG enzymatic activity. This is ATP phosphoribosyltransferase (hisG) from Saccharolobus solfataricus (strain ATCC 35092 / DSM 1617 / JCM 11322 / P2) (Sulfolobus solfataricus).